The chain runs to 493 residues: Lysine--tRNA ligase (493 aa).

Mg(2+) contacts are provided by E402 and E409.

It belongs to the class-II aminoacyl-tRNA synthetase family. Homodimer. It depends on Mg(2+) as a cofactor.

It is found in the cytoplasm. It catalyses the reaction tRNA(Lys) + L-lysine + ATP = L-lysyl-tRNA(Lys) + AMP + diphosphate. The protein is Lysine--tRNA ligase of Fusobacterium nucleatum subsp. nucleatum (strain ATCC 25586 / DSM 15643 / BCRC 10681 / CIP 101130 / JCM 8532 / KCTC 2640 / LMG 13131 / VPI 4355).